Here is a 382-residue protein sequence, read N- to C-terminus: Protein RecA (382 aa).

The segment at Met-1–Arg-20 is disordered. Residue Gly-79–Thr-86 coordinates ATP. Low complexity predominate over residues Ser-360–Thr-369. Positions Ser-360–Ala-382 are disordered. Residues Ala-370 to Ala-382 are compositionally biased toward basic and acidic residues.

It belongs to the RecA family.

The protein localises to the cytoplasm. Functionally, can catalyze the hydrolysis of ATP in the presence of single-stranded DNA, the ATP-dependent uptake of single-stranded DNA by duplex DNA, and the ATP-dependent hybridization of homologous single-stranded DNAs. It interacts with LexA causing its activation and leading to its autocatalytic cleavage. The polypeptide is Protein RecA (Synechococcus sp. (strain CC9311)).